The following is a 429-amino-acid chain: Enolase (429 aa).

Gln-163 lines the (2R)-2-phosphoglycerate pocket. The active-site Proton donor is Glu-205. Residues Asp-242, Glu-287, and Asp-314 each contribute to the Mg(2+) site. The (2R)-2-phosphoglycerate site is built by Lys-339, Arg-368, Ser-369, and Lys-390. The active-site Proton acceptor is Lys-339.

It belongs to the enolase family. Requires Mg(2+) as cofactor.

It is found in the cytoplasm. Its subcellular location is the secreted. It localises to the cell surface. It carries out the reaction (2R)-2-phosphoglycerate = phosphoenolpyruvate + H2O. The protein operates within carbohydrate degradation; glycolysis; pyruvate from D-glyceraldehyde 3-phosphate: step 4/5. Functionally, catalyzes the reversible conversion of 2-phosphoglycerate (2-PG) into phosphoenolpyruvate (PEP). It is essential for the degradation of carbohydrates via glycolysis. This chain is Enolase, found in Magnetococcus marinus (strain ATCC BAA-1437 / JCM 17883 / MC-1).